The following is a 1024-amino-acid chain: MNFIRNNRRALIQRMGLTVTKQICDDLFALNVLNNQEANVIYCEPLEQEAARKIIHMTMQKGSAACNLFLKSLENWDYFVYQDLTGQNLSYQVTEEDLNVLAQNLKDLYNSPAFLNFYPLGEDIDIIFNLEKTFTEPIMWKKDHRHHRVEQLTLGSLLEALKSPCLIEGESGKGKSTLLQRIAMLWASGGCRALKGFRLVFFIHLRSARGGLFETLYDQLLNIPDFISKPTFKALLLKLHKEVLFLLDGYNEFHPQNCPEIEALIKENHRFKNMVIVTTTTECLRHIRHVGALTAEVGDMTEDSAKDLIEAVLVPDQVERLWAQIQESRCLRNLMKTPLFVVITCAIQMGRQEFQAHTQTMLFQTFYDLLIQKNSHRYRGGASGDFARSLDYCGDLALEGVFAHKFDFEPEHGSSMNEDVLVTIGLLCKYTAQRLKPTYKFFHKSFQEYTAGRRLSSLLTSKEPEEVSKGNSYLNKMVSISDITSLYGNLLLYTCGSSTEATRAVMRHLAMVYQHGSLQGLSVTKRPLWRQESIQSLRNTTEQDVLKAINVNSFVECGINLFSESMSKSDLSQEFEAFFQGKSLYINSENIPDYLFDFFEYLPNCASALDFVKLDFYERATESQDKAEENVPGVHTEGPSETYIPPRAVSLFFNWKQEFKTLEVTLRDINKLNKQDIKYLGKIFSSATNLRLHIKRCAAMAGRLSSVLRTCKNMHTLMVEASPLTTDDEQYITSVTGLQNLSIHRLHTQQLPGGLIDSLGNLKNLERLILDDIRMNEEDAKNLAEGLRSLKKMRLLHLTHLSDIGEGMDYIVKSLSEESCDLQEMKLVACCLTANSVKVLAQNLHNLIKLSILDISENYLEKDGNEALQELIGRLGVLGELTTLMLPWCWDVHTSLPKLLKQLEGTPGLAKLGLKNWRLRDEEIKSLGEFLEMNPLRDLQQLDLAGHCVSSDGWLYFMNVFENLKQLVFFDFSTEEFLPDAALVRKLSQVLSKLTLLQEVKLTGWEFDDYDISAIKGTFKLVTA.

The CARD domain occupies 1–88 (MNFIRNNRRA…FVYQDLTGQN (88 aa)). Positions 95–298 (EEDLNVLAQN…HVGALTAEVG (204 aa)) are nucleotide-binding domain (NBD). Residues Thr-135, 172–177 (GKGKST), and His-443 contribute to the ATP site. The region spanning 163–476 (SPCLIEGESG…VSKGNSYLNK (314 aa)) is the NACHT domain. Positions 356–463 (AHTQTMLFQT…RLSSLLTSKE (108 aa)) are winged-helix domain (WHD). Ser-533 is modified (phosphoserine). LRR repeat units lie at residues 578–598 (FFQG…LFDF), 656–679 (KQEF…DIKY), 735–758 (VTGL…LIDS), 762–785 (LKNL…NLAE), 787–812 (LRSL…DYIV), 824–847 (EMKL…LHNL), 848–870 (IKLS…ALQE), 878–902 (LGEL…LLKQ), 911–933 (KLGL…FLEM), 936–963 (LRDL…VFEN), 965–985 (KQLV…ALVR), and 999–1021 (EVKL…TFKL).

Homooligomer; homooligomerizes following activation of Naip proteins by pathogenic proteins such as S.typhimurium (Salmonella) flagellin or PrgJ. Component of the NLRC4 inflammasome, at least composed of NLRC4, caspase-1 (CASP1) and some NAIP protein (Naip, Naip2 or Naip5). Interacts with Naip5 and Naip6; following Naip5 and Naip6 engagement by Salmonella flagellin. Interacts with Naip2; following Naip2 engagement by Salmonella PrgJ. The inflammasome is a huge complex that contains multiple copies of NLRC4 and a single Naip protein chain. Some NLRC4 inflammasomes contain PYCARD/ASC, while some others directly contact and activate CASP1. Interacts with EIF2AK2/PKR. Phosphorylated at Ser-533 following infection of macrophages with S.typhimurium (Salmonella). Phosphorylation is essential for NLRC4 inflammasome function to promote caspase-1 activation and pyroptosis. PRKCD phosphorylates Ser-533 in vitro. Expressed by intestinal mononuclear phagocytes.

The protein localises to the cytoplasm. The protein resides in the cytosol. It is found in the inflammasome. In terms of biological role, key component of inflammasomes that indirectly senses specific proteins from pathogenic bacteria and fungi and responds by assembling an inflammasome complex that promotes caspase-1 activation, cytokine production and macrophage pyroptosis. The NLRC4 inflammasome is activated as part of the innate immune response to a range of intracellular bacteria. It senses pathogenic proteins of the type III secretion system (T3SS) and type IV secretion system (T4SS) such as flagellin and PrgJ-like rod proteins via the Naip proteins (Naip1, Naip2 or Naip5): specific Naip proteins recognize and bind pathogenic proteins, driving assembly and activation of the NLRC4 inflammasome. The NLRC4 inflammasome senses Gram-negative bacteria such as L.pneumophila and P.aeruginosa, enteric pathogens S.typhimurium (Salmonella) and S.flexneri and fungal pathogen C.albicans. In intestine, the NLRC4 inflammasome is able to discriminate between commensal and pathogenic bacteria and specifically drives production of interleukin-1 beta (IL1B) in response to infection by Salmonella or P.aeruginosa. In case of L.pneumophila infection the inflammasome acts by activating caspase-7. This chain is NLR family CARD domain-containing protein 4 (Nlrc4), found in Mus musculus (Mouse).